The primary structure comprises 306 residues: Porphobilinogen deaminase (306 aa).

Cys-239 bears the S-(dipyrrolylmethanemethyl)cysteine mark.

Belongs to the HMBS family. As to quaternary structure, monomer. It depends on dipyrromethane as a cofactor.

It catalyses the reaction 4 porphobilinogen + H2O = hydroxymethylbilane + 4 NH4(+). Its pathway is porphyrin-containing compound metabolism; protoporphyrin-IX biosynthesis; coproporphyrinogen-III from 5-aminolevulinate: step 2/4. Its function is as follows. Tetrapolymerization of the monopyrrole PBG into the hydroxymethylbilane pre-uroporphyrinogen in several discrete steps. The sequence is that of Porphobilinogen deaminase from Helicobacter pylori (strain HPAG1).